Here is an 88-residue protein sequence, read N- to C-terminus: Protein WIR1A (88 aa).

Residues 1-13 (MASLGSSAGGRRP) lie on the Cytoplasmic side of the membrane. The helical transmembrane segment at 14-35 (TVLLQIALFVVVAAIIINSSVC) threads the bilayer. Residues 36-88 (LGATAVHDAAASGTGALDPNVPAVPTPGGAGQPYTGRGCRTVYGCRPPAGGQP) are Extracellular-facing.

It localises to the membrane. In terms of biological role, associated with pathogen defense. This chain is Protein WIR1A (WIR1A), found in Triticum aestivum (Wheat).